Consider the following 147-residue polypeptide: Large ribosomal subunit protein uL13 (147 aa).

Belongs to the universal ribosomal protein uL13 family. In terms of assembly, part of the 50S ribosomal subunit.

Functionally, this protein is one of the early assembly proteins of the 50S ribosomal subunit, although it is not seen to bind rRNA by itself. It is important during the early stages of 50S assembly. The sequence is that of Large ribosomal subunit protein uL13 from Rhodococcus opacus (strain B4).